The sequence spans 148 residues: Glutamyl-tRNA(Gln) amidotransferase subunit C, mitochondrial (148 aa).

It belongs to the GatC family. As to quaternary structure, subunit of the heterotrimeric GatCAB amidotransferase (AdT) complex, composed of A, B and C subunits.

The protein localises to the mitochondrion. It catalyses the reaction L-glutamyl-tRNA(Gln) + L-glutamine + ATP + H2O = L-glutaminyl-tRNA(Gln) + L-glutamate + ADP + phosphate + H(+). Functionally, allows the formation of correctly charged Gln-tRNA(Gln) through the transamidation of misacylated Glu-tRNA(Gln) in the mitochondria. The reaction takes place in the presence of glutamine and ATP through an activated gamma-phospho-Glu-tRNA(Gln). The polypeptide is Glutamyl-tRNA(Gln) amidotransferase subunit C, mitochondrial (Drosophila yakuba (Fruit fly)).